The sequence spans 249 residues: Thrombin-like enzyme barnettobin (249 aa).

A signal peptide spans 1-10 (APKELQVSYA). Residues 11 to 16 (HKSSEL) constitute a propeptide that is removed on maturation. A Peptidase S1 domain is found at 17 to 240 (VIGGDECDIN…YPPWIQSIIA (224 aa)). Intrachain disulfides connect Cys-23-Cys-154, Cys-41-Cys-57, Cys-89-Cys-247, Cys-133-Cys-201, Cys-165-Cys-180, and Cys-191-Cys-216. Active-site charge relay system residues include His-56 and Asp-101. Asn-145 and Asn-161 each carry an N-linked (GlcNAc...) asparagine glycan. The active-site Charge relay system is Ser-195. Residue Asn-242 is glycosylated (N-linked (GlcNAc...) asparagine).

Belongs to the peptidase S1 family. Snake venom subfamily. Monomer. Post-translationally, glycoprotein, contains approx. 52% carbohydrate which could be removed by N-glycosidase. Glycosylation is important, since deglycosylated barnettobin loses its clotting and defibrinogenating effects. In terms of tissue distribution, expressed by the venom gland.

The protein localises to the secreted. Its activity is regulated as follows. Both coagulant and amidolytic activities are inhibited by PMSF. Amidolytic activity is partially inhibited by DTT, chymostatin, SBTI and TLCK, but not by heparin and EDTA. Its function is as follows. Thrombin-like snake venom serine protease that releases only fibrinopeptide A from human Aalpha chain of fibrinogen (specific coagulant activity was 251.7 NIH thrombin units/mg). Also shows fibrino(geno)lytic activities in vitro and defibrinogenating effects in vivo. The chain is Thrombin-like enzyme barnettobin from Bothrops barnetti (Barnett's lancehead).